A 777-amino-acid polypeptide reads, in one-letter code: 1,4-alpha-glucan branching enzyme GlgB (777 aa).

D408 functions as the Nucleophile in the catalytic mechanism. Residue E461 is the Proton donor of the active site.

Belongs to the glycosyl hydrolase 13 family. GlgB subfamily. As to quaternary structure, monomer.

It carries out the reaction Transfers a segment of a (1-&gt;4)-alpha-D-glucan chain to a primary hydroxy group in a similar glucan chain.. Its pathway is glycan biosynthesis; glycogen biosynthesis. Catalyzes the formation of the alpha-1,6-glucosidic linkages in glycogen by scission of a 1,4-alpha-linked oligosaccharide from growing alpha-1,4-glucan chains and the subsequent attachment of the oligosaccharide to the alpha-1,6 position. The protein is 1,4-alpha-glucan branching enzyme GlgB of Actinobacillus pleuropneumoniae serotype 3 (strain JL03).